The following is a 145-amino-acid chain: Peptide methionine sulfoxide reductase MsrB (145 aa).

Residues Lys-6–Val-129 enclose the MsrB domain. The active-site Nucleophile is the Cys-118.

It belongs to the MsrB Met sulfoxide reductase family.

It carries out the reaction L-methionyl-[protein] + [thioredoxin]-disulfide + H2O = L-methionyl-(R)-S-oxide-[protein] + [thioredoxin]-dithiol. The sequence is that of Peptide methionine sulfoxide reductase MsrB from Listeria monocytogenes serotype 4b (strain CLIP80459).